Consider the following 341-residue polypeptide: L-threonine 3-dehydrogenase (341 aa).

Zn(2+) is bound at residue cysteine 38. Catalysis depends on charge relay system residues threonine 40 and histidine 43. Zn(2+) contacts are provided by histidine 63, glutamate 64, cysteine 93, cysteine 96, cysteine 99, and cysteine 107. Residues isoleucine 175, aspartate 195, arginine 200, 262 to 264 (LGI), and 286 to 287 (IY) contribute to the NAD(+) site.

This sequence belongs to the zinc-containing alcohol dehydrogenase family. In terms of assembly, homotetramer. Zn(2+) is required as a cofactor.

The protein localises to the cytoplasm. The catalysed reaction is L-threonine + NAD(+) = (2S)-2-amino-3-oxobutanoate + NADH + H(+). Its pathway is amino-acid degradation; L-threonine degradation via oxydo-reductase pathway; glycine from L-threonine: step 1/2. Its function is as follows. Catalyzes the NAD(+)-dependent oxidation of L-threonine to 2-amino-3-ketobutyrate. The polypeptide is L-threonine 3-dehydrogenase (Shewanella halifaxensis (strain HAW-EB4)).